The primary structure comprises 127 residues: Snaclec bothroinsularin subunit beta (127 aa).

3 disulfide bridges follow: Cys2/Cys13, Cys30/Cys123, and Cys100/Cys115. The region spanning Tyr9–Glu124 is the C-type lectin domain.

Belongs to the snaclec family. As to quaternary structure, heterodimer of subunits alpha and beta; disulfide-linked. Expressed by the venom gland.

The protein localises to the secreted. Thrombin and prothrombin (F2) inhibitor. The IC(50) of thrombin-induced platelet aggregation and fibrinocoagulation is 62 and 35 nM, respectively. Its inhibitory activity is at least 10-fold lower than that observed for other thrombin inhibitors. The chain is Snaclec bothroinsularin subunit beta from Bothrops insularis (Golden lancehead).